The primary structure comprises 295 residues: Light-independent protochlorophyllide reductase iron-sulfur ATP-binding protein (295 aa).

Residues 39 to 44 (GIGKST) and K68 each bind ATP. S43 is a Mg(2+) binding site. [4Fe-4S] cluster is bound by residues C124 and C158. Residue 209–210 (NR) coordinates ATP.

The protein belongs to the NifH/BchL/ChlL family. In terms of assembly, homodimer. Protochlorophyllide reductase is composed of three subunits; ChlL, ChlN and ChlB. Requires [4Fe-4S] cluster as cofactor.

The catalysed reaction is chlorophyllide a + oxidized 2[4Fe-4S]-[ferredoxin] + 2 ADP + 2 phosphate = protochlorophyllide a + reduced 2[4Fe-4S]-[ferredoxin] + 2 ATP + 2 H2O. The protein operates within porphyrin-containing compound metabolism; chlorophyll biosynthesis (light-independent). In terms of biological role, component of the dark-operative protochlorophyllide reductase (DPOR) that uses Mg-ATP and reduced ferredoxin to reduce ring D of protochlorophyllide (Pchlide) to form chlorophyllide a (Chlide). This reaction is light-independent. The L component serves as a unique electron donor to the NB-component of the complex, and binds Mg-ATP. The polypeptide is Light-independent protochlorophyllide reductase iron-sulfur ATP-binding protein (Prochlorococcus marinus (strain AS9601)).